We begin with the raw amino-acid sequence, 189 residues long: UPF0398 protein LVIS_0849 (189 aa).

The protein belongs to the UPF0398 family.

The protein is UPF0398 protein LVIS_0849 of Levilactobacillus brevis (strain ATCC 367 / BCRC 12310 / CIP 105137 / JCM 1170 / LMG 11437 / NCIMB 947 / NCTC 947) (Lactobacillus brevis).